Consider the following 397-residue polypeptide: Argininosuccinate synthase (397 aa).

7–15 (AFSGGLDTT) serves as a coordination point for ATP. Tyrosine 84 serves as a coordination point for L-citrulline. Glycine 114 serves as a coordination point for ATP. L-aspartate-binding residues include threonine 116, asparagine 120, and aspartate 121. Asparagine 120 serves as a coordination point for L-citrulline. Arginine 124, serine 170, serine 179, glutamate 254, and tyrosine 266 together coordinate L-citrulline.

This sequence belongs to the argininosuccinate synthase family. Type 1 subfamily. As to quaternary structure, homotetramer.

Its subcellular location is the cytoplasm. The catalysed reaction is L-citrulline + L-aspartate + ATP = 2-(N(omega)-L-arginino)succinate + AMP + diphosphate + H(+). The protein operates within amino-acid biosynthesis; L-arginine biosynthesis; L-arginine from L-ornithine and carbamoyl phosphate: step 2/3. The sequence is that of Argininosuccinate synthase from Haloquadratum walsbyi (strain DSM 16790 / HBSQ001).